Here is a 348-residue protein sequence, read N- to C-terminus: Dihydroorotase (348 aa).

Zn(2+) is bound by residues His17 and His19. Residues 19–21 (HLR) and Asn45 each bind substrate. Lys103, His140, and His178 together coordinate Zn(2+). Position 103 is an N6-carboxylysine (Lys103). Position 140 (His140) interacts with substrate. Leu223 is a binding site for substrate. Position 251 (Asp251) interacts with Zn(2+). Residue Asp251 is part of the active site. Substrate contacts are provided by His255 and Ala267.

It belongs to the metallo-dependent hydrolases superfamily. DHOase family. Class II DHOase subfamily. Homodimer. Requires Zn(2+) as cofactor.

It carries out the reaction (S)-dihydroorotate + H2O = N-carbamoyl-L-aspartate + H(+). Its pathway is pyrimidine metabolism; UMP biosynthesis via de novo pathway; (S)-dihydroorotate from bicarbonate: step 3/3. Functionally, catalyzes the reversible cyclization of carbamoyl aspartate to dihydroorotate. The chain is Dihydroorotase from Enterobacter sp. (strain 638).